The following is a 354-amino-acid chain: Sulfate/thiosulfate import ATP-binding protein CysA (354 aa).

The ABC transporter domain maps to 3-237 (IEVRGLSKRF…PATPFVYGFL (235 aa)). Position 35-42 (35-42 (GPSGCGKT)) interacts with ATP.

It belongs to the ABC transporter superfamily. Sulfate/tungstate importer (TC 3.A.1.6) family. As to quaternary structure, the complex is composed of two ATP-binding proteins (CysA), two transmembrane proteins (CysT and CysW) and a solute-binding protein (CysP).

Its subcellular location is the cell inner membrane. It carries out the reaction sulfate(out) + ATP + H2O = sulfate(in) + ADP + phosphate + H(+). It catalyses the reaction thiosulfate(out) + ATP + H2O = thiosulfate(in) + ADP + phosphate + H(+). Functionally, part of the ABC transporter complex CysAWTP involved in sulfate/thiosulfate import. Responsible for energy coupling to the transport system. This chain is Sulfate/thiosulfate import ATP-binding protein CysA, found in Bordetella pertussis (strain Tohama I / ATCC BAA-589 / NCTC 13251).